Consider the following 221-residue polypeptide: Casparian strip membrane protein 2 (221 aa).

The segment at 1–21 (MEKSEATTIEIGETSRESKGK) is disordered. The Cytoplasmic segment spans residues 1–41 (MEKSEATTIEIGETSRESKGKTPLLAEVEQTARTAGSYRRG). Residues 42 to 62 (VAIFDLILRVSAATSALAATI) traverse the membrane as a helical segment. At 63-89 (TMGTTEQTLPFFTQFFQFQASYDDLPA) the chain is on the extracellular side. The helical transmembrane segment at 90-110 (FTFFVIALSIVTGYLVLSVPF) threads the bilayer. The Cytoplasmic portion of the chain corresponds to 111–131 (SVVCIAQPLAAVPRLLLIVCD). A helical transmembrane segment spans residues 132–152 (TLTVTLATAAASSSAAIVYLA). The Extracellular portion of the chain corresponds to 153–221 (HNGNADANWL…HYWDRRWCEI (69 aa)).

This sequence belongs to the Casparian strip membrane proteins (CASP) family. In terms of assembly, homodimer and heterodimers.

The protein resides in the cell membrane. Regulates membrane-cell wall junctions and localized cell wall deposition. Required for establishment of the Casparian strip membrane domain (CSD) and the subsequent formation of Casparian strips, a cell wall modification of the root endodermis that determines an apoplastic barrier between the intraorganismal apoplasm and the extraorganismal apoplasm and prevents lateral diffusion. The sequence is that of Casparian strip membrane protein 2 from Erythranthe guttata (Yellow monkey flower).